The sequence spans 201 residues: MARYTGPRSRISRRFGEPVMGDSKALQKKNYAPGMHGRNKKRKQSEYSIQLKEKQKAKYTYGVLERQFAKTFDTAARKQGITGENLLKMLEARLDNTVYRLGIASSRRAARQLVIHKHIVVNGDVVNIPSYQLKPGDQLGVREKSKSIEAITDSLSTQSAKKFTWLEWDQSSMLGKFVTYPQREEIPENIQEQLIVELYSK.

The disordered stretch occupies residues 1-46; the sequence is MARYTGPRSRISRRFGEPVMGDSKALQKKNYAPGMHGRNKKRKQSE. Residues 92-151 form the S4 RNA-binding domain; sequence ARLDNTVYRLGIASSRRAARQLVIHKHIVVNGDVVNIPSYQLKPGDQLGVREKSKSIEAI.

This sequence belongs to the universal ribosomal protein uS4 family. As to quaternary structure, part of the 30S ribosomal subunit. Contacts protein S5. The interaction surface between S4 and S5 is involved in control of translational fidelity.

In terms of biological role, one of the primary rRNA binding proteins, it binds directly to 16S rRNA where it nucleates assembly of the body of the 30S subunit. Its function is as follows. With S5 and S12 plays an important role in translational accuracy. The polypeptide is Small ribosomal subunit protein uS4 (Cytophaga hutchinsonii (strain ATCC 33406 / DSM 1761 / CIP 103989 / NBRC 15051 / NCIMB 9469 / D465)).